The primary structure comprises 124 residues: Basic leucine zipper transcriptional factor ATF-like (124 aa).

Positions 1–23 are enriched in polar residues; the sequence is MAQGSDNNDTSYTKSPSPGNKQG. Residues 1 to 60 form a disordered region; that stretch reads MAQGSDNNDTSYTKSPSPGNKQGSSDDMRKVMRREKNRIAAQKSRMRQTQKADSLHLESE. Residues 27–90 form the bZIP domain; sequence DMRKVMRREK…KYLSTVLSNH (64 aa). Positions 29–51 are basic motif; the sequence is RKVMRREKNRIAAQKSRMRQTQK. Positions 55 to 83 are leucine-zipper; sequence LHLESESLEKENAALRKEVKRLTEEAKYL.

The protein belongs to the bZIP family.

Its subcellular location is the nucleus. The protein localises to the cytoplasm. Functionally, AP-1 family transcription factor that controls the differentiation of lineage-specific cells in the immune system: specifically mediates the differentiation of T-helper 17 cells (Th17), follicular T-helper cells (TfH), CD8(+) dendritic cells and class-switch recombination (CSR) in B-cells. The chain is Basic leucine zipper transcriptional factor ATF-like (batf) from Danio rerio (Zebrafish).